The following is a 463-amino-acid chain: Chromosomal replication initiator protein DnaA (463 aa).

The interval 1–83 (MSLTLWQQCL…LRFEVGSKPV (83 aa)) is domain I, interacts with DnaA modulators. Positions 83 to 126 (VAQAISQPVMVSAHASAPGVVSRPAPTRPSWDNVPALAELSYRS) are domain II. The segment at 127–343 (NVNTKHNFDN…GALNRVIANA (217 aa)) is domain III, AAA+ region. Residues Gly171, Gly173, Lys174, and Thr175 each coordinate ATP. Residues 344–463 (NFTGRAITID…FSNLIRTLSS (120 aa)) form a domain IV, binds dsDNA region.

Belongs to the DnaA family. As to quaternary structure, oligomerizes as a right-handed, spiral filament on DNA at oriC.

It localises to the cytoplasm. Functionally, plays an essential role in the initiation and regulation of chromosomal replication. ATP-DnaA binds to the origin of replication (oriC) to initiate formation of the DNA replication initiation complex once per cell cycle. Binds the DnaA box (a 9 base pair repeat at the origin) and separates the double-stranded (ds)DNA. Forms a right-handed helical filament on oriC DNA; dsDNA binds to the exterior of the filament while single-stranded (ss)DNA is stabiized in the filament's interior. The ATP-DnaA-oriC complex binds and stabilizes one strand of the AT-rich DNA unwinding element (DUE), permitting loading of DNA polymerase. After initiation quickly degrades to an ADP-DnaA complex that is not apt for DNA replication. Binds acidic phospholipids. In Erwinia tasmaniensis (strain DSM 17950 / CFBP 7177 / CIP 109463 / NCPPB 4357 / Et1/99), this protein is Chromosomal replication initiator protein DnaA.